A 715-amino-acid polypeptide reads, in one-letter code: Putative membrane protein IgaA homolog (715 aa).

5 consecutive transmembrane segments (helical) span residues 2–22, 214–234, 235–255, 349–369, and 663–683; these read STIV…GLLW, EACA…GPTV, TLPW…WYLF, NLTL…YVPL, and ATSL…VLLI.

The protein belongs to the IgaA family.

It is found in the cell inner membrane. The protein is Putative membrane protein IgaA homolog of Yersinia pestis.